Reading from the N-terminus, the 707-residue chain is MLGSLVLRRKALAPRLLLRLLRSPTLRGHGGASGRNVTTGSLGEPQWLRVATGGRPGTSPALFSGRGAATGGRQGGRFDTKCLAAATWGRLPGPEETLPGQDSWNGVPSRAGLGMCALAAALVVHCYSKSPSNKDAALLEAARANNMQEVSRLLSEGADVNAKHRLGWTALMVAAINRNNSVVQVLLAAGADPNLGDDFSSVYKTAKEQGIHSLEDGGQDGASRHITNQWTSALEFRRWLGLPAGVLITREDDFNNRLNNRASFKGCTALHYAVLADDYRTVKELLDGGANPLQRNEMGHTPLDYAREGEVMKLLRTSEAKYQEKQRKREAEERRRFPLEQRLKEHIIGQESAIATVGAAIRRKENGWYDEEHPLVFLFLGSSGIGKTELAKQTAKYMHKDAKKGFIRLDMSEFQERHEVAKFIGSPPGYVGHEEGGQLTKKLKQCPNAVVLFDEVDKAHPDVLTIMLQLFDEGRLTDGKGKTIDCKDAIFIMTSNVASDEIAQHALQLRQEALEMSRNRIAENLGDVQISDKITISKNFKENVIRPILKAHFRRDEFLGRINEIVYFLPFCHSELIQLVNKELNFWAKRAKQRHNITLLWDREVADVLVDGYNVHYGARSIKHEVERRVVNQLAAAYEQDLLPGGCTLRITVEDSDKQLLKSPELPSPQAEKRLPKLRLEIIDKDSKTRRLDIRAPLHPEKVCNTI.

Residues 1-36 constitute a mitochondrion transit peptide; the sequence is MLGSLVLRRKALAPRLLLRLLRSPTLRGHGGASGRN. Residues 92 to 126 are autoinhibitory; it reads PGPEETLPGQDSWNGVPSRAGLGMCALAAALVVHC. 4 ANK repeats span residues 133-162, 166-195, 265-295, and 298-327; these read NKDA…DVNA, LGWT…DPNL, KGCT…PLQR, and MGHT…EKQR. Residues histidine 346, isoleucine 348, serine 383, glycine 384, isoleucine 385, glycine 386, lysine 387, threonine 388, glutamate 455, and asparagine 496 each coordinate ATP. The segment at 507-535 is regulatory; slows ATPase and disaggregase activities; sequence LQLRQEALEMSRNRIAENLGDVQISDKIT. Arginine 561 serves as a coordination point for ATP. Position 589 is an N6-acetyllysine (lysine 589). Arginine 620 contributes to the ATP binding site.

It belongs to the ClpA/ClpB family. In terms of assembly, homododecamer when substrate-bound; the homododecamer consists of 2 homohexamers stacked head-to-head via ANK repeat-mediated interactions. The active substrate-bound form is likely to exist in a dynamic equilibrium between homohexamers and homododecamers. Homotetradecamer in the unbound state which is remodeled upon substrate binding into the homododecamer. Interacts with PHB and PHB2. Interacts with MAVS; the interaction is enhanced by Sendai virus infection. Post-translationally, proteolytically cleaved by protease PARL. ATP-dependent protein disaggregase activity is stimulated by PARL-mediated cleavage of the N-terminal autoinhibitory peptide. As to expression, widely expressed (at protein level). Expressed in fetal, as well as in adult tissues, with highest levels in adult brain, including thalamus, hippocampus, occipital cortex and parietal cortex. Low expression in granulocytes.

The protein localises to the mitochondrion intermembrane space. The catalysed reaction is ATP + H2O = ADP + phosphate + H(+). Its activity is regulated as follows. Disaggregase activity is inhibited by ADP. Functions as a regulatory ATPase and participates in secretion/protein trafficking process. Has ATP-dependent protein disaggregase activity and is required to maintain the solubility of key mitochondrial proteins. Involved in mitochondrial-mediated antiviral innate immunity, activates RIG-I-mediated signal transduction and production of IFNB1 and pro-inflammatory cytokine IL6. Plays a role in granulocyte differentiation. The protein is Mitochondrial disaggregase of Homo sapiens (Human).